A 116-amino-acid chain; its full sequence is U11-theraphotoxin-Hhn1b (116 aa).

A signal peptide spans 1–21 (MNTVRVAFLLVFVLAVSLGQA). The propeptide occupies 22 to 74 (DKDENRMEMQEKTEQGKSYLDFAENLLLQKLEELEAKLLEEDSEESRNSRQKR). A disordered region spans residues 61–83 (EEDSEESRNSRQKRCIGEGVPCD). 3 disulfide bridges follow: C75/C90, C82/C95, and C89/C110.

Belongs to the neurotoxin 14 (magi-1) family. 01 (HNTX-16) subfamily. Expressed by the venom gland.

Its subcellular location is the secreted. Functionally, probable ion channel inhibitor. This Cyriopagopus hainanus (Chinese bird spider) protein is U11-theraphotoxin-Hhn1b.